Consider the following 278-residue polypeptide: Octanoyltransferase LipM (278 aa).

Residues 33 to 248 (KKMPPTIRFY…GFEKGLDVEL (216 aa)) form the BPL/LPL catalytic domain. The active-site Acyl-thioester intermediate is Cys150.

It belongs to the octanoyltransferase LipM family. Monomer.

It carries out the reaction octanoyl-[ACP] + L-lysyl-[protein] = N(6)-octanoyl-L-lysyl-[protein] + holo-[ACP] + H(+). It participates in protein modification; protein lipoylation via endogenous pathway; protein N(6)-(lipoyl)lysine from octanoyl-[acyl-carrier-protein]. Its function is as follows. Catalyzes the transfer of endogenously produced octanoic acid from octanoyl-acyl-carrier-protein onto the lipoyl domain of GcvH, an intermediate carrier during protein lipoylation. The protein is Octanoyltransferase LipM of Bacillus cereus (strain ATCC 14579 / DSM 31 / CCUG 7414 / JCM 2152 / NBRC 15305 / NCIMB 9373 / NCTC 2599 / NRRL B-3711).